Reading from the N-terminus, the 146-residue chain is Nitric oxide reductase subunit C (146 aa).

A helical; Signal-anchor membrane pass occupies residues 13–29 (IYFGGSVFFFLVFLGLT). Positions 61, 64, and 65 each coordinate heme c.

In terms of assembly, heterodimer of cytochromes b (large subunit) and c (small subunit).

It localises to the cell membrane. Its function is as follows. Component of the anaerobic respiratory chain that transforms nitrate to dinitrogen (denitrification). This is Nitric oxide reductase subunit C (norC) from Stutzerimonas stutzeri (Pseudomonas stutzeri).